Consider the following 895-residue polypeptide: Protein translocase subunit SecA (895 aa).

Residues Gln-89, 107 to 111, and Asp-502 each bind ATP; that span reads GEGKT. Disordered regions lie at residues 560 to 579 and 848 to 884; these read RRIDNQLRGRSGRQGDPGRT and AAPAAEPVEAPKEGFVEDDPSTWGNPSRNDKCPCGSG. The Zn(2+) site is built by Cys-879, Cys-881, Cys-890, and His-891.

This sequence belongs to the SecA family. Monomer and homodimer. Part of the essential Sec protein translocation apparatus which comprises SecA, SecYEG and auxiliary proteins SecDF-YajC and YidC. It depends on Zn(2+) as a cofactor.

Its subcellular location is the cell inner membrane. The protein resides in the cytoplasm. The catalysed reaction is ATP + H2O + cellular proteinSide 1 = ADP + phosphate + cellular proteinSide 2.. Functionally, part of the Sec protein translocase complex. Interacts with the SecYEG preprotein conducting channel. Has a central role in coupling the hydrolysis of ATP to the transfer of proteins into and across the cell membrane, serving both as a receptor for the preprotein-SecB complex and as an ATP-driven molecular motor driving the stepwise translocation of polypeptide chains across the membrane. This chain is Protein translocase subunit SecA, found in Ruegeria sp. (strain TM1040) (Silicibacter sp.).